The following is a 159-amino-acid chain: SsrA-binding protein (159 aa).

A compositionally biased stretch (basic and acidic residues) spans 138–153; sequence KREDGKDKDWSREKER. The interval 138–159 is disordered; that stretch reads KREDGKDKDWSREKERLMKHKA.

The protein belongs to the SmpB family.

The protein localises to the cytoplasm. Required for rescue of stalled ribosomes mediated by trans-translation. Binds to transfer-messenger RNA (tmRNA), required for stable association of tmRNA with ribosomes. tmRNA and SmpB together mimic tRNA shape, replacing the anticodon stem-loop with SmpB. tmRNA is encoded by the ssrA gene; the 2 termini fold to resemble tRNA(Ala) and it encodes a 'tag peptide', a short internal open reading frame. During trans-translation Ala-aminoacylated tmRNA acts like a tRNA, entering the A-site of stalled ribosomes, displacing the stalled mRNA. The ribosome then switches to translate the ORF on the tmRNA; the nascent peptide is terminated with the 'tag peptide' encoded by the tmRNA and targeted for degradation. The ribosome is freed to recommence translation, which seems to be the essential function of trans-translation. The chain is SsrA-binding protein from Pseudoalteromonas translucida (strain TAC 125).